Consider the following 129-residue polypeptide: uncharacterized protein (129 aa).

Residues Ala103–Phe125 form a helical membrane-spanning segment.

It is found in the membrane. This is an uncharacterized protein from Acanthamoeba polyphaga (Amoeba).